The following is a 173-amino-acid chain: ATP-dependent protease subunit HslV (173 aa).

Residue Thr-2 is part of the active site. Residues Gly-158, Asp-161, and Ser-164 each contribute to the Na(+) site.

This sequence belongs to the peptidase T1B family. HslV subfamily. In terms of assembly, a double ring-shaped homohexamer of HslV is capped on each side by a ring-shaped HslU homohexamer. The assembly of the HslU/HslV complex is dependent on binding of ATP.

It is found in the cytoplasm. The enzyme catalyses ATP-dependent cleavage of peptide bonds with broad specificity.. Allosterically activated by HslU binding. In terms of biological role, protease subunit of a proteasome-like degradation complex believed to be a general protein degrading machinery. The sequence is that of ATP-dependent protease subunit HslV from Mannheimia haemolytica (Pasteurella haemolytica).